The following is a 168-amino-acid chain: 6,7-dimethyl-8-ribityllumazine synthase (168 aa).

Residues Phe-24, 58–60, and 82–84 contribute to the 5-amino-6-(D-ribitylamino)uracil site; these read ALE and AVI. Position 87–88 (87–88) interacts with (2S)-2-hydroxy-3-oxobutyl phosphate; it reads ET. His-90 serves as the catalytic Proton donor. A 5-amino-6-(D-ribitylamino)uracil-binding site is contributed by Asn-115. Residue Arg-129 coordinates (2S)-2-hydroxy-3-oxobutyl phosphate.

Belongs to the DMRL synthase family.

It catalyses the reaction (2S)-2-hydroxy-3-oxobutyl phosphate + 5-amino-6-(D-ribitylamino)uracil = 6,7-dimethyl-8-(1-D-ribityl)lumazine + phosphate + 2 H2O + H(+). It participates in cofactor biosynthesis; riboflavin biosynthesis; riboflavin from 2-hydroxy-3-oxobutyl phosphate and 5-amino-6-(D-ribitylamino)uracil: step 1/2. Catalyzes the formation of 6,7-dimethyl-8-ribityllumazine by condensation of 5-amino-6-(D-ribitylamino)uracil with 3,4-dihydroxy-2-butanone 4-phosphate. This is the penultimate step in the biosynthesis of riboflavin. The polypeptide is 6,7-dimethyl-8-ribityllumazine synthase (Paraburkholderia phytofirmans (strain DSM 17436 / LMG 22146 / PsJN) (Burkholderia phytofirmans)).